The sequence spans 239 residues: MEIFPAIDLKEGRCVRLYQGEFSKETVMNEDPVAQAIIFEKLGAEILHIVDLDGAIAGESLNLPVIEKICKAVRIPVQVGGGIRSLVAVEKLLSVGVEKVILGTAALYDKSFLEEAVRLYKEKIIVGIDAKNGFVATRGWLDLSEISYISLAKQMESLGVQTIVFTDISKDGTLAGPNFEQLALLQKSVGIRLIASGGVASIQDVKKLNDMNIYGVIIGKALYEKTIDLEEVLQVTKLC.

The active-site Proton acceptor is the Asp-8. Asp-129 functions as the Proton donor in the catalytic mechanism.

This sequence belongs to the HisA/HisF family.

It is found in the cytoplasm. It carries out the reaction 1-(5-phospho-beta-D-ribosyl)-5-[(5-phospho-beta-D-ribosylamino)methylideneamino]imidazole-4-carboxamide = 5-[(5-phospho-1-deoxy-D-ribulos-1-ylimino)methylamino]-1-(5-phospho-beta-D-ribosyl)imidazole-4-carboxamide. The protein operates within amino-acid biosynthesis; L-histidine biosynthesis; L-histidine from 5-phospho-alpha-D-ribose 1-diphosphate: step 4/9. The protein is 1-(5-phosphoribosyl)-5-[(5-phosphoribosylamino)methylideneamino] imidazole-4-carboxamide isomerase of Bacillus cereus (strain B4264).